Reading from the N-terminus, the 593-residue chain is Probable serine/threonine-protein kinase samkB (593 aa).

The region spanning 29-93 is the SAM domain; the sequence is WNNEAVCEWL…SIFKKLKNNN (65 aa). The tract at residues 108 to 157 is disordered; the sequence is ESNSINNSNNNNNNNNNNNNNNNNNNNNNNNNNNNNNNNNNNNNNNKIDT. The segment covering 113–153 has biased composition (low complexity); it reads NNSNNNNNNNNNNNNNNNNNNNNNNNNNNNNNNNNNNNNNN. The 253-residue stretch at 186-438 folds into the Protein kinase domain; it reads YKLIEEIGRG…SKQLLEAQWF (253 aa). ATP contacts are provided by residues 192-200 and Lys-216; that span reads IGRGAFSIV. Asp-313 functions as the Proton acceptor in the catalytic mechanism.

This sequence belongs to the protein kinase superfamily. Ser/Thr protein kinase family.

The enzyme catalyses L-seryl-[protein] + ATP = O-phospho-L-seryl-[protein] + ADP + H(+). The catalysed reaction is L-threonyl-[protein] + ATP = O-phospho-L-threonyl-[protein] + ADP + H(+). The chain is Probable serine/threonine-protein kinase samkB (samkB) from Dictyostelium discoideum (Social amoeba).